A 953-amino-acid chain; its full sequence is Coatomer subunit beta (953 aa).

HEAT repeat units lie at residues 17 to 54 (DSEP…NGEK), 96 to 131 (QEMI…KEAE), 132 to 168 (LLEP…NFEH), 240 to 276 (SERA…SAPT), 277 to 314 (AIKA…HPSH), 316 to 353 (RVLQ…SRNV), and 396 to 433 (DMAA…RFDN).

As to quaternary structure, oligomeric complex that consists of at least the alpha, beta, beta', gamma, delta, epsilon and zeta subunits.

The protein localises to the cytoplasm. It is found in the golgi apparatus membrane. It localises to the cytoplasmic vesicle. Its subcellular location is the COPI-coated vesicle membrane. Its function is as follows. The coatomer is a cytosolic protein complex that binds to dilysine motifs and reversibly associates with Golgi non-clathrin-coated vesicles, which further mediate biosynthetic protein transport from the ER, via the Golgi up to the trans Golgi network. Coatomer complex is required for budding from Golgi membranes, and is essential for the retrograde Golgi-to-ER transport of dilysine-tagged proteins. This Gallus gallus (Chicken) protein is Coatomer subunit beta (COPB1).